Consider the following 147-residue polypeptide: Leghemoglobin 8 (147 aa).

The region spanning 2–147 is the Globin domain; that stretch reads GFTEKQESLV…LAASIKKSMS (146 aa). A nitrated tyrosine mark is found at Tyr-25 and Tyr-30. Ser-45 contacts heme b. Ser-45 is modified (phosphoserine). Position 62 (His-62) interacts with O2. 3 residues coordinate heme b: Lys-65, His-94, and Lys-97. Tyr-135 bears the Nitrated tyrosine mark.

Belongs to the plant globin family. As to quaternary structure, monomer. Interacts with CAS31 in the cytoplasm; this interaction leads to its protection from denaturation under thermal and drought stresses. In terms of processing, nitrated in effective nodules and particularly in hypoxic conditions; this mechanism may play a protective role in the symbiosis by buffering toxic peroxynitrite NO(2)(-). Nitration level decrease during nodule senescence. Post-translationally, phosphorylation at Ser-45 disrupts the molecular environment of its porphyrin ring oxygen binding pocket, thus leading to a reduced oxygen consumption and to the delivery of oxygen O(2) to symbiosomes. In terms of tissue distribution, root nodules.

The protein localises to the cytoplasm. Its subcellular location is the nucleus. In terms of biological role, leghemoglobin that reversibly binds oxygen O(2) through a pentacoordinated heme iron. In root nodules, facilitates the diffusion of oxygen to the bacteroids while preventing the bacterial nitrogenase from being inactivated by buffering dioxygen, nitric oxide and carbon monoxide, and promoting the formation of reactive oxygen species (ROS, e.g. H(2)O(2)). This role is essential for symbiotic nitrogen fixation (SNF). The sequence is that of Leghemoglobin 8 from Medicago truncatula (Barrel medic).